We begin with the raw amino-acid sequence, 127 residues long: Chondrosarcoma-associated gene 2/3 protein (127 aa).

A disordered region spans residues M68–P127.

As to expression, weakly expressed in kidney. Expressed in various tumor cell lines including carcinomas, myeloid and lymphoid malignancies, melanomas and prostate cancer. Overexpressed in taxol-resistant breast cancer line MDA 435TR and the doxorubicin-resistant multiple myelanoma lines RPMI-8226/Dox40 and RPMI-8226/MDR10V.

Its function is as follows. Drug-resistance related protein, its expression is associated with the chemotherapy resistant and neoplastic phenotype. May also be linked to the malignant phenotype. The chain is Chondrosarcoma-associated gene 2/3 protein (CSAG2) from Homo sapiens (Human).